The following is a 337-amino-acid chain: Glyceraldehyde-3-phosphate dehydrogenase 1 (337 aa).

NAD(+)-binding positions include 11–12, aspartate 33, and arginine 78; that span reads RI. Residues 149–151, threonine 180, 209–210, and arginine 232 contribute to the D-glyceraldehyde 3-phosphate site; these read SCT and TG. The active-site Nucleophile is cysteine 150. Asparagine 318 lines the NAD(+) pocket.

Belongs to the glyceraldehyde-3-phosphate dehydrogenase family. Homotetramer.

It localises to the cytoplasm. The enzyme catalyses D-glyceraldehyde 3-phosphate + phosphate + NAD(+) = (2R)-3-phospho-glyceroyl phosphate + NADH + H(+). It functions in the pathway carbohydrate degradation; glycolysis; pyruvate from D-glyceraldehyde 3-phosphate: step 1/5. The sequence is that of Glyceraldehyde-3-phosphate dehydrogenase 1 (gpd1) from Agaricus bisporus (White button mushroom).